The chain runs to 319 residues: ATP-dependent 6-phosphofructokinase (319 aa).

Residue Gly-11 participates in ATP binding. Residue 21-25 participates in ADP binding; that stretch reads RAVVR. Residues 72-73 and 102-105 contribute to the ATP site; these read RC and GDGS. A Mg(2+)-binding site is contributed by Asp-103. Substrate is bound at residue 125-127; it reads TID. The Proton acceptor role is filled by Asp-127. Arg-154 serves as a coordination point for ADP. Substrate contacts are provided by residues Arg-162 and 169–171; that span reads MGR. Residues 185-187, Arg-211, and 213-215 each bind ADP; these read GAE and KKH. Substrate is bound by residues Glu-222, Arg-243, and 249–252; that span reads HIQR.

Belongs to the phosphofructokinase type A (PFKA) family. ATP-dependent PFK group I subfamily. Prokaryotic clade 'B1' sub-subfamily. As to quaternary structure, homotetramer. Component of a possible RNA degradosome complex composed of rny, rnjA, rnjB, pnp, pfkA and eno (although rnjA and rnjB's presence is unclear). Specifically interacts with RNase Y (rny, PubMed:21803996) and enolase (eno, PubMed:22198292). Interacts with BrxC. It depends on Mg(2+) as a cofactor.

Its subcellular location is the cytoplasm. The enzyme catalyses beta-D-fructose 6-phosphate + ATP = beta-D-fructose 1,6-bisphosphate + ADP + H(+). It functions in the pathway carbohydrate degradation; glycolysis; D-glyceraldehyde 3-phosphate and glycerone phosphate from D-glucose: step 3/4. Its activity is regulated as follows. Allosterically activated by ADP and other diphosphonucleosides, and allosterically inhibited by phosphoenolpyruvate. In terms of biological role, catalyzes the phosphorylation of D-fructose 6-phosphate to fructose 1,6-bisphosphate by ATP, the first committing step of glycolysis. The polypeptide is ATP-dependent 6-phosphofructokinase (Bacillus subtilis (strain 168)).